A 324-amino-acid chain; its full sequence is Biotin synthase (324 aa).

The 228-residue stretch at asparagine 42–arginine 269 folds into the Radical SAM core domain. [4Fe-4S] cluster-binding residues include cysteine 57, cysteine 61, and cysteine 64. [2Fe-2S] cluster is bound by residues cysteine 101, cysteine 132, cysteine 192, and arginine 264.

The protein belongs to the radical SAM superfamily. Biotin synthase family. Homodimer. The cofactor is [4Fe-4S] cluster. It depends on [2Fe-2S] cluster as a cofactor.

The enzyme catalyses (4R,5S)-dethiobiotin + (sulfur carrier)-SH + 2 reduced [2Fe-2S]-[ferredoxin] + 2 S-adenosyl-L-methionine = (sulfur carrier)-H + biotin + 2 5'-deoxyadenosine + 2 L-methionine + 2 oxidized [2Fe-2S]-[ferredoxin]. Its pathway is cofactor biosynthesis; biotin biosynthesis; biotin from 7,8-diaminononanoate: step 2/2. Functionally, catalyzes the conversion of dethiobiotin (DTB) to biotin by the insertion of a sulfur atom into dethiobiotin via a radical-based mechanism. The polypeptide is Biotin synthase (Ehrlichia canis (strain Jake)).